We begin with the raw amino-acid sequence, 411 residues long: MTDGPIKVNSEIGALKTVLLKRPGKELENLVPDYLDGLLFDDIPYLEVAQKEHDHFAQVLREEGVEVLYLEKLAAESIENPQVRSEFIDDVLAESKKTILGHEEEIKALFATLSNQELVDKIMSGVRKEEINPKCTHLVEYMDDKYPFYLDPMPNLYFTRDPQASIGHGITINRMFWRARRRESIFIQYIVKHHPRFKDANIPIWLDRDCPFNIEGGDELVLSKEVLAIGVSERTSAQAIEKLARRIFENPQATFKKVVAIEIPTSRTFMHLDTVFTMIDYDKFTIHSAILKAEGNMNIFIIEYDDVNKDISIKQSSHLKDTLEDVLGIDDIQFIPTGNGDVIDGAREQWNDGSNTLCIRPGVVVTYDRNYVSNDLLRQKGIKVIEISGSELVRGRGGPRCMSQPLFREDI.

Catalysis depends on cysteine 401, which acts as the Amidino-cysteine intermediate.

Belongs to the arginine deiminase family.

The protein localises to the cytoplasm. It carries out the reaction L-arginine + H2O = L-citrulline + NH4(+). Its pathway is amino-acid degradation; L-arginine degradation via ADI pathway; carbamoyl phosphate from L-arginine: step 1/2. The sequence is that of Arginine deiminase from Staphylococcus aureus (strain MRSA252).